The sequence spans 598 residues: 4-coumarate--CoA ligase-like 6 (598 aa).

Residues serine 232, serine 233, glycine 234, threonine 235, threonine 236, and lysine 240 each coordinate ATP. CoA is bound at residue arginine 318. Residues aspartate 320–glutamine 389 are SBD1. Glycine 367, glutamine 389, and threonine 394 together coordinate (E)-4-coumaroyl-AMP. Glutamine 389, threonine 394, aspartate 475, and arginine 490 together coordinate ATP. The SBD2 stretch occupies residues serine 390–tyrosine 454. Residues lysine 492 and lysine 496 each contribute to the (E)-4-coumaroyl-AMP site. Lysine 498 and glycine 499 together coordinate CoA. Lysine 581 lines the ATP pocket.

The protein belongs to the ATP-dependent AMP-binding enzyme family. It depends on Mg(2+) as a cofactor.

It catalyses the reaction (E)-4-coumarate + ATP + CoA = (E)-4-coumaroyl-CoA + AMP + diphosphate. The enzyme catalyses (E)-4-coumarate + ATP + H(+) = (E)-4-coumaroyl-AMP + diphosphate. The catalysed reaction is (E)-4-coumaroyl-AMP + CoA = (E)-4-coumaroyl-CoA + AMP + H(+). In terms of biological role, carboxylate--CoA ligase that may use 4-coumarate as substrate. Follows a two-step reaction mechanism, wherein the carboxylate substrate first undergoes adenylation by ATP, followed by a thioesterification in the presence of CoA to yield the final CoA thioester. The polypeptide is 4-coumarate--CoA ligase-like 6 (4CLL6) (Oryza sativa subsp. japonica (Rice)).